A 311-amino-acid chain; its full sequence is MMSSDPPSLRFGQVVIGPPGSGKTTYCRGMQEFLSRLGRKVVIVNLDPANEGLPYPCAVDIAELVTLDDVMDGLKLGPNGGLIYSMEYLEANLDWLENKLKLHHDCYFLFDCPGQVELYTHHNSVKNIFAQLSKWNFRLTAVHLVDSHYCADPAKFISVLCTSLSTMLHVELPHVNVLSKMDLIEQYGKLAFNLDFYTEVLDLSYLVEHLSADPFFRNFNHLNVKLAEVIQDYSLVSFVPLNVQDKESMMQVLRTVDKANGYCFGDLEERNLQAMMSAAVGADFQFSTTLGVQEKYLDATKNHVEDEVMDL.

GTP is bound at residue 20 to 25 (GSGKTT). A Gly-Pro-Asn (GPN)-loop; involved in dimer interface motif is present at residues 77–79 (GPN). 179–182 (SKMD) serves as a coordination point for GTP.

Belongs to the GPN-loop GTPase family. In terms of assembly, heterodimers with gpn1 or gpn3. Binds to RNA polymerase II (RNAPII).

In terms of biological role, small GTPase required for proper localization of RNA polymerase II and III (RNAPII and RNAPIII). May act at an RNAP assembly step prior to nuclear import. This Danio rerio (Zebrafish) protein is GPN-loop GTPase 2.